The following is a 135-amino-acid chain: UPF0102 protein Mkms_2031 (135 aa).

This sequence belongs to the UPF0102 family.

The chain is UPF0102 protein Mkms_2031 from Mycobacterium sp. (strain KMS).